The primary structure comprises 162 residues: Cytochrome c-type biogenesis protein CcmE (162 aa).

Residues 1 to 8 (MNPVRKKR) are Cytoplasmic-facing. A helical; Signal-anchor for type II membrane protein transmembrane segment spans residues 9 to 29 (LIIVLAILVGVGAAVGLALSA). Residues 30-162 (LQQNINLFYT…GETSYNQEGK (133 aa)) are Periplasmic-facing. Residues His124 and Tyr128 each coordinate heme. The span at 139–148 (DSGQLKHYEN) shows a compositional bias: basic and acidic residues. A disordered region spans residues 139 to 162 (DSGQLKHYENGKAAGETSYNQEGK).

The protein belongs to the CcmE/CycJ family.

It is found in the cell inner membrane. Functionally, heme chaperone required for the biogenesis of c-type cytochromes. Transiently binds heme delivered by CcmC and transfers the heme to apo-cytochromes in a process facilitated by CcmF and CcmH. This Pseudomonas paraeruginosa (strain DSM 24068 / PA7) (Pseudomonas aeruginosa (strain PA7)) protein is Cytochrome c-type biogenesis protein CcmE.